The following is a 1601-amino-acid chain: Rap guanine nucleotide exchange factor 6 (1601 aa).

The residue at position 1 (M1) is an N-acetylmethionine. Disordered stretches follow at residues 1-22 and 179-250; these read MNSP…ERTP and PHPQ…QGRD. S3 bears the Phosphoserine mark. The span at 187-205 shows a compositional bias: low complexity; sequence SSSQSGCSIASDSGSSSLS. Residues 228–241 are compositionally biased toward acidic residues; sequence VDSEDDEEEDEEID. An a nucleoside 3',5'-cyclic phosphate-binding site is contributed by 280–399; the sequence is AFANMTMSVR…VEEEGEIVMV (120 aa). The 115-residue stretch at 412-526 folds into the N-terminal Ras-GEF domain; it reads KGHIVIKATP…LLNIACAAKA (115 aa). The PDZ domain maps to 530–615; that stretch reads QVVLQKASRE…LTVKTNIFVF (86 aa). The region spanning 749 to 835 is the Ras-associating domain; it reads PDQVIRVFKV…GRYYLKNNME (87 aa). The 229-residue stretch at 860 to 1088 folds into the Ras-GEF domain; the sequence is STIEVATQLS…LDVQGGAHKK (229 aa). 4 disordered regions span residues 1192-1274, 1302-1324, 1455-1478, and 1571-1601; these read IRKK…SRSS, ESTG…QHGP, LEST…VYKT, and QRHN…VSAV. Composition is skewed to low complexity over residues 1229–1238 and 1255–1274; these read SVASSLHSSP and SAKS…SRSS. The segment covering 1586-1601 has biased composition (acidic residues); sequence TDADSEADENEQVSAV.

Interacts with the second PDZ domain of human PTP1e. In terms of tissue distribution, isoform 3 has highest expression levels in the brain, heart, liver, lung and placenta and is barely detectable in skeletal muscle, kidney and pancreas.

It is found in the cytoplasm. Its subcellular location is the cell membrane. Its function is as follows. Guanine nucleotide exchange factor (GEF) for Rap1A, Rap2A and M-Ras GTPases. Does not interact with cAMP. This chain is Rap guanine nucleotide exchange factor 6 (RAPGEF6), found in Homo sapiens (Human).